The chain runs to 327 residues: Probable cell division protein WhiA (327 aa).

Residues 275 to 308 (SLEELGRLADPPMTKDAVAGRIRRLLSMADRKAK) constitute a DNA-binding region (H-T-H motif).

It belongs to the WhiA family.

In terms of biological role, involved in cell division and chromosome segregation. The sequence is that of Probable cell division protein WhiA from Mycobacterium leprae (strain Br4923).